Here is a 364-residue protein sequence, read N- to C-terminus: tRNA N6-adenosine threonylcarbamoyltransferase (364 aa).

The Fe cation site is built by His-118 and His-122. Residues 140-144 (LVSGG), Asp-173, Gly-186, and Asn-288 contribute to the substrate site. Asp-316 provides a ligand contact to Fe cation.

Belongs to the KAE1 / TsaD family. Fe(2+) serves as cofactor.

It is found in the cytoplasm. It carries out the reaction L-threonylcarbamoyladenylate + adenosine(37) in tRNA = N(6)-L-threonylcarbamoyladenosine(37) in tRNA + AMP + H(+). Functionally, required for the formation of a threonylcarbamoyl group on adenosine at position 37 (t(6)A37) in tRNAs that read codons beginning with adenine. Is involved in the transfer of the threonylcarbamoyl moiety of threonylcarbamoyl-AMP (TC-AMP) to the N6 group of A37, together with TsaE and TsaB. TsaD likely plays a direct catalytic role in this reaction. This is tRNA N6-adenosine threonylcarbamoyltransferase from Cereibacter sphaeroides (strain KD131 / KCTC 12085) (Rhodobacter sphaeroides).